Consider the following 415-residue polypeptide: tRNA(Met) cytidine acetate ligase (415 aa).

ATP is bound by residues 7–20, Gly-102, Asn-165, and 190–191; these read IVEY…HLYH and RI.

This sequence belongs to the TmcAL family.

Its subcellular location is the cytoplasm. It carries out the reaction cytidine(34) in elongator tRNA(Met) + acetate + ATP = N(4)-acetylcytidine(34) in elongator tRNA(Met) + AMP + diphosphate. In terms of biological role, catalyzes the formation of N(4)-acetylcytidine (ac(4)C) at the wobble position of elongator tRNA(Met), using acetate and ATP as substrates. First activates an acetate ion to form acetyladenylate (Ac-AMP) and then transfers the acetyl group to tRNA to form ac(4)C34. The polypeptide is tRNA(Met) cytidine acetate ligase (Acetivibrio thermocellus (strain ATCC 27405 / DSM 1237 / JCM 9322 / NBRC 103400 / NCIMB 10682 / NRRL B-4536 / VPI 7372) (Clostridium thermocellum)).